We begin with the raw amino-acid sequence, 416 residues long: Lactose permease (416 aa).

The Cytoplasmic portion of the chain corresponds to methionine 1–glycine 13. A helical transmembrane segment spans residues phenylalanine 14–leucine 34. Residues histidine 35–threonine 45 are Periplasmic-facing. Residues glycine 46–leucine 66 form a helical membrane-spanning segment. Topologically, residues serine 67–histidine 75 are cytoplasmic. Residues leucine 76–glycine 96 form a helical membrane-spanning segment. Position 97 (proline 97) is a topological domain, periplasmic. A helical membrane pass occupies residues leucine 98 to tyrosine 118. Residues asparagine 119–arginine 144 are Cytoplasmic-facing. A helical transmembrane segment spans residues methionine 145–asparagine 165. Position 166 (asparagine 166) is a topological domain, periplasmic. A helical membrane pass occupies residues glutamine 167–serine 187. At lysine 188–lysine 211 the chain is on the cytoplasmic side. The chain crosses the membrane as a helical span at residues leucine 212–valine 232. The Periplasmic portion of the chain corresponds to serine 233–glycine 262. Residues tyrosine 263–valine 283 traverse the membrane as a helical segment. Topologically, residues asparagine 284–asparagine 290 are cytoplasmic. The chain crosses the membrane as a helical span at residues alanine 291–histidine 309. Topologically, residues threonine 310–valine 314 are periplasmic. The helical transmembrane segment at valine 315–isoleucine 336 threads the bilayer. Residues threonine 337 to threonine 347 are Cytoplasmic-facing. Residues isoleucine 348–alanine 368 traverse the membrane as a helical segment. Over glycine 369 to glutamine 378 the chain is Periplasmic. Residues glycine 379–leucine 399 form a helical membrane-spanning segment. At serine 400–leucine 416 the chain is on the cytoplasmic side.

The protein belongs to the major facilitator superfamily. Oligosaccharide:H(+) symporter (OHS) (TC 2.A.1.5) family.

The protein resides in the cell inner membrane. The enzyme catalyses lactose(in) + H(+)(in) = lactose(out) + H(+)(out). Functionally, responsible for transport of beta-galactosides into the cell, with the concomitant import of a proton (symport system). The protein is Lactose permease (lacY) of Citrobacter freundii.